The primary structure comprises 152 residues: MFRGASAINLDTKGRIAIPVRYREPLQLEHQGRIVITVDIQSACLLLYPIHEWELIEAKLLKLSDTDKTQRSLKRLLLGYAHEVELDGNGRILLPPPLRQYANLDKRIMLVGQLNKFELWDEQSWLQQIDECQETIRSEELASNERLADFSL.

SpoVT-AbrB domains are found at residues 5 to 52 and 81 to 124; these read ASAI…PIHE and AHEV…DEQS.

It belongs to the MraZ family. Forms oligomers.

The protein resides in the cytoplasm. It localises to the nucleoid. The polypeptide is Transcriptional regulator MraZ (Shewanella baltica (strain OS223)).